The following is a 388-amino-acid chain: MALRSISFNQDYTCLAAGFDAAYKVYNCDPFGECFQKADDGGANLVEMLFSTSLIAVVGIGDKPANTMRKLKIINTKRKAVICELTFPTAILYVKMNRKRLVVVLVDQIFVYDVSCMKLLHSIEASAGLDDRIICDLCADDESVLVFQQSGSSDELAANAGTVVVFDALQIQPINVIECHRSPLQRIAVSKDGRLLATASVKGTIVRVFRVADGRKVHEFRRGSYTAQISCLSFNVDATVLCCSSNTGTVHFFRLDDVDRRRSTGSIDANIDGSETLPRESSITEEESSEINRLINSQLGGHNGFAKKKSAESLKNFIWSKSKTYLPSQINSILEPKRDYAFIKLTTEVESVVGLVDNNCYVATRAGDFFVYSVQPGQCVLLKHYKIE.

WD repeat units lie at residues 179-219 (CHRS…KVHE) and 224-263 (SYTA…RRRS). The short motif at 220–224 (FRRGS) is the L/FRRG motif element.

This sequence belongs to the WD repeat PROPPIN family.

It localises to the cytoplasm. The protein resides in the membrane. Its subcellular location is the vacuole membrane. In terms of biological role, involved in peroxisome sequestration to the vacuole during macropexophagy. Also required for microautophagy. This is Autophagy-related protein 21 (ATG21) from Pichia angusta (Yeast).